Consider the following 142-residue polypeptide: Large ribosomal subunit protein uL11 (142 aa).

It belongs to the universal ribosomal protein uL11 family. In terms of assembly, part of the ribosomal stalk of the 50S ribosomal subunit. Interacts with L10 and the large rRNA to form the base of the stalk. L10 forms an elongated spine to which L12 dimers bind in a sequential fashion forming a multimeric L10(L12)X complex. One or more lysine residues are methylated.

Its function is as follows. Forms part of the ribosomal stalk which helps the ribosome interact with GTP-bound translation factors. In Liberibacter asiaticus (Citrus greening disease), this protein is Large ribosomal subunit protein uL11.